The following is a 357-amino-acid chain: MPGIRLLLAAALLCCPPPAGATSWWSLAQNPVQRPEMYIIGAQPVCSQLSSLSPGQKKLCQLYQDHMMYIGEGAKTGIKECQYQFKQRRWNCSTVDNTSVFGRVMQIGSRETAFTYAVSAAGVVNAISRACREGELSTCGCSRTTRPKDLHRDWLWGGCGDNVDYGYRFAKEFVDAREREKNYPKGSEEQARTLMNLQNNEAGRRAVYKLADAACKCHGVSGSCSLKTCWLQLADFRKVGDHLKEKYDSAAAMRINRKGKLELVNNRFNLPTVEDLVYTDQSPDYCLRNESTGSLGTLGRLCNKTSEGMDGCELMCCGRGYDQFKTVQVERCHCKFHWCCFVKCKKCTEIVDQYVCK.

The signal sequence occupies residues 1–18; sequence MPGIRLLLAAALLCCPPP. Cysteines 81 and 92 form a disulfide. 2 N-linked (GlcNAc...) asparagine glycosylation sites follow: Asn-91 and Asn-97. 10 cysteine pairs are disulfide-bonded: Cys-131-Cys-139, Cys-141-Cys-159, Cys-215-Cys-229, Cys-217-Cys-224, Cys-286-Cys-317, Cys-302-Cys-312, Cys-316-Cys-356, Cys-332-Cys-347, Cys-334-Cys-344, and Cys-339-Cys-340. A lipid anchor (O-palmitoleoyl serine; by PORCN) is attached at Ser-221. 2 N-linked (GlcNAc...) asparagine glycosylation sites follow: Asn-289 and Asn-303.

The protein belongs to the Wnt family. Post-translationally, palmitoleoylation is required for efficient binding to frizzled receptors. Depalmitoleoylation leads to Wnt signaling pathway inhibition. Predominantly in neuroectodermal tissues.

The protein localises to the secreted. The protein resides in the extracellular space. It localises to the extracellular matrix. In terms of biological role, ligand for members of the frizzled family of seven transmembrane receptors. Probable developmental protein. May be a signaling molecule which affects the development of discrete regions of tissues. Is likely to signal over only few cell diameters. The sequence is that of Protein Wnt-5b (WNT-5B) from Ambystoma mexicanum (Axolotl).